We begin with the raw amino-acid sequence, 381 residues long: MSWTVGILRASQRAGTVRANFLCLGMAPSPCPPAATPLGGAWAVAPASKMATVKCELMKNFTSEEPVRNSKISIVGTGSVGMACAVSILLKGLSDELALVDVDEGRLKGETMDLQHGSLFVKMPNIVSSRDYVVTANSNLVIITAGARQEKGETRLNLVQRNVAIFKLMMSSIVQYSPRCKLIVVSNPVDILTYVAWKLSAFPQNRVIGSGCNLDTARFRFLIGQRLSIHSESCHGWILGEHGDSSVPVWSGVNIAGVPLKELNLDIGTDKDPEQWKNVHKDVVASAYEIIKMKGYTYWAIGLSVADLTESILKNLRRVHPVSTRIKGLYGINEEVFLSVPCILGESGITDLIKVKLAPEEEARLQKSAKTLWDIQKELKF.

Residues 101 to 106 and arginine 148 contribute to the NAD(+) site; that span reads DVDEGR. Substrate contacts are provided by arginine 155, asparagine 187, and arginine 218. NAD(+) is bound at residue asparagine 187. Residue histidine 242 is the Proton acceptor of the active site. Residue threonine 297 participates in substrate binding.

Belongs to the LDH/MDH superfamily. LDH family.

It carries out the reaction (S)-lactate + NAD(+) = pyruvate + NADH + H(+). It participates in fermentation; pyruvate fermentation to lactate; (S)-lactate from pyruvate: step 1/1. This is L-lactate dehydrogenase A-like 6B (LDHAL6B) from Bos taurus (Bovine).